A 513-amino-acid chain; its full sequence is GMP synthase [glutamine-hydrolyzing] (513 aa).

A Glutamine amidotransferase type-1 domain is found at 3 to 200; it reads SVLVLDFGSQ…LIDIAGITPD (198 aa). Residue C80 is the Nucleophile of the active site. Active-site residues include H174 and E176. The region spanning 201–388 is the GMPS ATP-PPase domain; the sequence is WSPKHFIDHQ…LGIAEDILMR (188 aa). 228–234 lines the ATP pocket; the sequence is SGGVDSS.

In terms of assembly, homodimer.

It carries out the reaction XMP + L-glutamine + ATP + H2O = GMP + L-glutamate + AMP + diphosphate + 2 H(+). The protein operates within purine metabolism; GMP biosynthesis; GMP from XMP (L-Gln route): step 1/1. Catalyzes the synthesis of GMP from XMP. The chain is GMP synthase [glutamine-hydrolyzing] from Chlorobium limicola (strain DSM 245 / NBRC 103803 / 6330).